Consider the following 278-residue polypeptide: Lectin 6 (278 aa).

The first 23 residues, 1 to 23 (MTLSSALIKIFITFLFLQNHVNS), serve as a signal peptide directing secretion. N116, N139, and N271 each carry an N-linked (GlcNAc...) asparagine glycan.

Belongs to the leguminous lectin family.

May be involved in arbuscular mycorrhizal (AM) symbiosis with AM fungi. The sequence is that of Lectin 6 from Medicago truncatula (Barrel medic).